The following is a 220-amino-acid chain: GTP cyclohydrolase 1 (220 aa).

Residues cysteine 113, histidine 116, and cysteine 184 each coordinate Zn(2+).

This sequence belongs to the GTP cyclohydrolase I family. Homomer.

It carries out the reaction GTP + H2O = 7,8-dihydroneopterin 3'-triphosphate + formate + H(+). Its pathway is cofactor biosynthesis; 7,8-dihydroneopterin triphosphate biosynthesis; 7,8-dihydroneopterin triphosphate from GTP: step 1/1. The protein is GTP cyclohydrolase 1 of Hamiltonella defensa subsp. Acyrthosiphon pisum (strain 5AT).